The following is a 185-amino-acid chain: CASP-like protein 5A1 (185 aa).

Residues 1–45 lie on the Cytoplasmic side of the membrane; the sequence is MNVSHPAVHPVGVPPALGGHAVPPRMRMRVRMEYLVFQGMPLPGT. A helical membrane pass occupies residues 46–66; the sequence is LGGLVLRLGQFCSALIAFSVM. At 67–76 the chain is on the extracellular side; it reads LSVRDFSVTA. The helical transmembrane segment at 77–97 threads the bilayer; sequence FCYLVAATVLQCLWSLAMAVI. Topologically, residues 98 to 121 are cytoplasmic; sequence DVYALLVKRSLRNPLLVSIFVVGD. A helical membrane pass occupies residues 122–142; that stretch reads GVTATLTFAAACASAGVIVLI. The Extracellular segment spans residues 143–160; the sequence is GNDIAMCKDNPCANYEAA. Residues 161–181 traverse the membrane as a helical segment; the sequence is IIMAFLSWFMVSISFILTFWL. Residues 182-185 lie on the Cytoplasmic side of the membrane; the sequence is LATL.

This sequence belongs to the Casparian strip membrane proteins (CASP) family. Homodimer and heterodimers.

The protein resides in the cell membrane. This is CASP-like protein 5A1 from Picea sitchensis (Sitka spruce).